Reading from the N-terminus, the 474-residue chain is tRNA-2-methylthio-N(6)-dimethylallyladenosine synthase (474 aa).

Residues 3–120 (KKLHIKTWGC…LPDMIEQVRR (118 aa)) enclose the MTTase N-terminal domain. 6 residues coordinate [4Fe-4S] cluster: C12, C49, C83, C157, C161, and C164. The region spanning 143-375 (RAEGPTAFVS…QDRITQQAMR (233 aa)) is the Radical SAM core domain. The TRAM domain occupies 378–441 (RHMMGTVQRI…TNSLRGKFIR (64 aa)).

This sequence belongs to the methylthiotransferase family. MiaB subfamily. Monomer. The cofactor is [4Fe-4S] cluster.

Its subcellular location is the cytoplasm. It carries out the reaction N(6)-dimethylallyladenosine(37) in tRNA + (sulfur carrier)-SH + AH2 + 2 S-adenosyl-L-methionine = 2-methylsulfanyl-N(6)-dimethylallyladenosine(37) in tRNA + (sulfur carrier)-H + 5'-deoxyadenosine + L-methionine + A + S-adenosyl-L-homocysteine + 2 H(+). Functionally, catalyzes the methylthiolation of N6-(dimethylallyl)adenosine (i(6)A), leading to the formation of 2-methylthio-N6-(dimethylallyl)adenosine (ms(2)i(6)A) at position 37 in tRNAs that read codons beginning with uridine. The sequence is that of tRNA-2-methylthio-N(6)-dimethylallyladenosine synthase from Shewanella sp. (strain MR-7).